The primary structure comprises 341 residues: ATP synthase subunit a 2 (341 aa).

An N-terminal signal peptide occupies residues 1–33; sequence MKRVKVIQIKGFFRVMALLAPLLLNAYLPVQAS. 6 helical membrane passes run 112 to 132, 173 to 193, 195 to 215, 242 to 262, 273 to 293, and 307 to 327; these read VVMLWIVSAILLVLFSFVGAA, LPYLLTVFMFILLCNILGLIP, GATATGNINVTLTLAVFTFFI, WIIMIPIEVIGLFTKPFALTV, IVILSLIFISFILKSYVVAAA, and IFVAFLQAFIFTMLSALFIGL.

It belongs to the ATPase A chain family. F-type ATPases have 2 components, CF(1) - the catalytic core - and CF(0) - the membrane proton channel. CF(1) has five subunits: alpha(3), beta(3), gamma(1), delta(1), epsilon(1). CF(0) has four main subunits: a, b, b' and c.

The protein resides in the cell inner membrane. Functionally, key component of the proton channel; it plays a direct role in the translocation of protons across the membrane. The sequence is that of ATP synthase subunit a 2 from Chlorobium luteolum (strain DSM 273 / BCRC 81028 / 2530) (Pelodictyon luteolum).